The sequence spans 351 residues: Photosystem II D2 protein (351 aa).

The helical transmembrane segment at cysteine 39 to threonine 59 threads the bilayer. Residue histidine 116 coordinates chlorophyll a. Residues glycine 123–proline 139 traverse the membrane as a helical segment. Glutamine 128 and asparagine 141 together coordinate pheophytin a. The chain crosses the membrane as a helical span at residues leucine 151 to serine 164. Histidine 196 contributes to the chlorophyll a binding site. The helical transmembrane segment at glycine 206 to aspartate 226 threads the bilayer. Positions 213 and 260 each coordinate a plastoquinone. Position 213 (histidine 213) interacts with Fe cation. Histidine 267 is a binding site for Fe cation. Residues glycine 277–arginine 293 form a helical membrane-spanning segment.

It belongs to the reaction center PufL/M/PsbA/D family. PSII is composed of 1 copy each of membrane proteins PsbA, PsbB, PsbC, PsbD, PsbE, PsbF, PsbH, PsbI, PsbJ, PsbK, PsbL, PsbM, PsbT, PsbX, PsbY, PsbZ, Psb30/Ycf12, peripheral proteins PsbO, CyanoQ (PsbQ), PsbU, PsbV and a large number of cofactors. It forms dimeric complexes. The cofactor is The D1/D2 heterodimer binds P680, chlorophylls that are the primary electron donor of PSII, and subsequent electron acceptors. It shares a non-heme iron and each subunit binds pheophytin, quinone, additional chlorophylls, carotenoids and lipids. There is also a Cl(-1) ion associated with D1 and D2, which is required for oxygen evolution. The PSII complex binds additional chlorophylls, carotenoids and specific lipids..

Its subcellular location is the cellular thylakoid membrane. It carries out the reaction 2 a plastoquinone + 4 hnu + 2 H2O = 2 a plastoquinol + O2. Functionally, photosystem II (PSII) is a light-driven water:plastoquinone oxidoreductase that uses light energy to abstract electrons from H(2)O, generating O(2) and a proton gradient subsequently used for ATP formation. It consists of a core antenna complex that captures photons, and an electron transfer chain that converts photonic excitation into a charge separation. The D1/D2 (PsbA/PsbD) reaction center heterodimer binds P680, the primary electron donor of PSII as well as several subsequent electron acceptors. D2 is needed for assembly of a stable PSII complex. The protein is Photosystem II D2 protein of Prochlorothrix hollandica.